The sequence spans 130 residues: Ribonuclease P protein component 2 (130 aa).

Belongs to the eukaryotic/archaeal RNase P protein component 2 family. As to quaternary structure, consists of a catalytic RNA component and at least 4-5 protein subunits.

The protein resides in the cytoplasm. It catalyses the reaction Endonucleolytic cleavage of RNA, removing 5'-extranucleotides from tRNA precursor.. In terms of biological role, part of ribonuclease P, a protein complex that generates mature tRNA molecules by cleaving their 5'-ends. The polypeptide is Ribonuclease P protein component 2 (Methanococcus maripaludis (strain C5 / ATCC BAA-1333)).